Consider the following 135-residue polypeptide: Large ribosomal subunit protein uL16c (135 aa).

It belongs to the universal ribosomal protein uL16 family. In terms of assembly, part of the 50S ribosomal subunit.

It is found in the plastid. The sequence is that of Large ribosomal subunit protein uL16c from Epifagus virginiana (Beechdrops).